A 166-amino-acid polypeptide reads, in one-letter code: Thiol peroxidase (166 aa).

The Thioredoxin domain occupies leucine 18–lysine 166. Cysteine 60 functions as the Cysteine sulfenic acid (-SOH) intermediate in the catalytic mechanism. Residues cysteine 60 and cysteine 94 are joined by a disulfide bond.

The protein belongs to the peroxiredoxin family. Tpx subfamily. As to quaternary structure, homodimer.

The catalysed reaction is a hydroperoxide + [thioredoxin]-dithiol = an alcohol + [thioredoxin]-disulfide + H2O. In terms of biological role, thiol-specific peroxidase that catalyzes the reduction of hydrogen peroxide and organic hydroperoxides to water and alcohols, respectively. Plays a role in cell protection against oxidative stress by detoxifying peroxides. The chain is Thiol peroxidase from Helicobacter pylori (strain ATCC 700392 / 26695) (Campylobacter pylori).